A 345-amino-acid chain; its full sequence is L-Ala-D/L-Glu epimerase (345 aa).

Substrate contacts are provided by T134 and K159. K161 acts as the Proton acceptor; specific for (R)-substrate epimerization in catalysis. Position 188 (D188) interacts with Mg(2+). A substrate-binding site is contributed by N190. Mg(2+)-binding residues include E216 and D241. K265 serves as the catalytic Proton acceptor; specific for (S)-substrate epimerization. Residues C292, D317, and D319 each contribute to the substrate site.

This sequence belongs to the mandelate racemase/muconate lactonizing enzyme family. Mg(2+) is required as a cofactor.

The catalysed reaction is L-alanyl-L-glutamate = L-alanyl-D-glutamate. It participates in cell wall degradation; peptidoglycan degradation. Catalyzes the epimerization of L-Ala-D-Glu to L-Ala-L-Glu and has probably a role in the metabolism of the murein peptide, of which L-Ala-D-Glu is a component. Is also able to catalyze the reverse reaction and the epimerization of a broad range of other dipeptides; is most efficient with L-Ala-D/L-Phe, L-Ala-D/L-Tyr, and L-Ala-D/L-His. The protein is L-Ala-D/L-Glu epimerase of Thermotoga maritima (strain ATCC 43589 / DSM 3109 / JCM 10099 / NBRC 100826 / MSB8).